The primary structure comprises 238 residues: Octanoyltransferase (238 aa).

One can recognise a BPL/LPL catalytic domain in the interval 44 to 224 (AGGPDSLLLL…AVLDALDGRI (181 aa)). Substrate is bound by residues 82–89 (RGGKITWH), 154–156 (AIG), and 167–169 (GFA). The active-site Acyl-thioester intermediate is the C185.

Belongs to the LipB family.

Its subcellular location is the cytoplasm. It catalyses the reaction octanoyl-[ACP] + L-lysyl-[protein] = N(6)-octanoyl-L-lysyl-[protein] + holo-[ACP] + H(+). It functions in the pathway protein modification; protein lipoylation via endogenous pathway; protein N(6)-(lipoyl)lysine from octanoyl-[acyl-carrier-protein]: step 1/2. In terms of biological role, catalyzes the transfer of endogenously produced octanoic acid from octanoyl-acyl-carrier-protein onto the lipoyl domains of lipoate-dependent enzymes. Lipoyl-ACP can also act as a substrate although octanoyl-ACP is likely to be the physiological substrate. This Mycolicibacterium gilvum (strain PYR-GCK) (Mycobacterium gilvum (strain PYR-GCK)) protein is Octanoyltransferase.